The following is a 176-amino-acid chain: Tubulin polymerization-promoting protein family member 3 (176 aa).

N-acetylalanine is present on A2. The segment at 132 to 152 (TGSHKERFDESGKGKGIAGRQ) is disordered. Residues 134–144 (SHKERFDESGK) show a composition bias toward basic and acidic residues.

Belongs to the TPPP family.

Its subcellular location is the cytoplasm. The protein localises to the cytoskeleton. Its function is as follows. Regulator of microtubule dynamic that has microtubule bundling activity. Required for embryo implantation; possibly by regulating beta-catenin. Also required for decidualization via regulation of beta-catenin. In Mus musculus (Mouse), this protein is Tubulin polymerization-promoting protein family member 3.